The following is a 380-amino-acid chain: MYG1 exonuclease (380 aa).

Residues 1–46 constitute a mitochondrion transit peptide; sequence MGRRFLRGILTLPLRSVLQAQHRMLGSEQDPPAKRPRNNLMAPPRI. Residues Lys-266 and Lys-272 each carry the N6-acetyllysine modification.

Belongs to the MYG1 family. Ubiquitously expressed, with highest levels in testis.

The protein localises to the nucleus. The protein resides in the nucleoplasm. It localises to the mitochondrion matrix. Its subcellular location is the nucleolus. Its function is as follows. 3'-5' RNA exonuclease which cleaves in situ on specific transcripts in both nucleus and mitochondrion. Involved in regulating spatially segregated organellar RNA processing, acts as a coordinator of nucleo-mitochondrial crosstalk. In nucleolus, processes pre-ribosomal RNA involved in ribosome assembly and alters cytoplasmic translation. In mitochondrial matrix, processes 3'-termini of the mito-ribosomal and messenger RNAs and controls translation of mitochondrial proteins. The polypeptide is MYG1 exonuclease (Mus musculus (Mouse)).